A 97-amino-acid polypeptide reads, in one-letter code: Large ribosomal subunit protein uL23 (97 aa).

Belongs to the universal ribosomal protein uL23 family. As to quaternary structure, part of the 50S ribosomal subunit. Contacts protein L29, and trigger factor when it is bound to the ribosome.

Functionally, one of the early assembly proteins it binds 23S rRNA. One of the proteins that surrounds the polypeptide exit tunnel on the outside of the ribosome. Forms the main docking site for trigger factor binding to the ribosome. This is Large ribosomal subunit protein uL23 from Acidithiobacillus ferrooxidans (strain ATCC 23270 / DSM 14882 / CIP 104768 / NCIMB 8455) (Ferrobacillus ferrooxidans (strain ATCC 23270)).